The following is a 985-amino-acid chain: Regulator of telomere elongation helicase 1 homolog (985 aa).

In terms of domain architecture, Helicase ATP-binding spans 7 to 303 (AGIPVHFPFE…QDMGGDEPKD (297 aa)). Residue 42 to 49 (SPTGTGKT) participates in ATP binding. [4Fe-4S] cluster-binding residues include Cys-146, Cys-164, Cys-173, and Cys-209. The short motif at 252–255 (DEAH) is the DEAH box element. The segment at 858–884 (GSSGMVKIHKRERSSPTQPESSSQVSK) is disordered. Over residues 872–882 (SPTQPESSSQV) the composition is skewed to polar residues. Phosphothreonine is present on Thr-874.

The protein belongs to the helicase family. RAD3/XPD subfamily.

It localises to the nucleus. The catalysed reaction is ATP + H2O = ADP + phosphate + H(+). Functionally, a probable ATP-dependent DNA helicase implicated in DNA repair and the maintenance of genomic stability. Acts as an anti-recombinase to counteract toxic recombination and limit crossover during meiosis. Regulates meiotic recombination and crossover homeostasis by physically dissociating strand invasion events and thereby promotes noncrossover repair by meiotic synthesis dependent strand annealing (SDSA) as well as disassembly of D loop recombination intermediates. This is Regulator of telomere elongation helicase 1 homolog from Drosophila yakuba (Fruit fly).